A 525-amino-acid polypeptide reads, in one-letter code: MHPSMTLLAILPPLVRASIGNPHLLPTPPMGFNNWARFMCNLNESLFLDTAAAMLDTGLHAAGYTRLNLDDCWMASHRAPNGSLPWDPTKFPHSLPWLSAQLRSLGFSLGIYQDAGNVTCGGYPGSYGFEELDAHTFAEWGVDYLKLDGCNVSPAGAVSLADEYRARYARWHSVLGAMPHPLVFSESAPAYFVDPQNATAWYGVMDWVPAYGELARHSTDILVYEGEGSAWQSIMVNYRYNTLLARYQRPGYFNDPDFLIADHPGLSLVEKRSHFALWASFGAPLIISADVPGLSKEVIAVLTNADLIRVDQDALGLQATLASRSEHLDVLTRSLDGGDRLVTILNRGDGGLAVKVPVGWMGLQRCAYQAKNLWDGEIQEIEEDIEVQLDSHATEVFRVSLPPDCPMVIPTGIVFNTASGNCLTDGEALAFEPCRGQDLQVWQVEESGILRPLSRTSHCLTAIGDNVVVKPCTGRPGQRWTYHITGNLQNQHTGACLTEGTGIDVCGFELDSQVFGLPSGVDIEA.

Positions 1 to 17 (MHPSMTLLAILPPLVRA) are cleaved as a signal peptide. Cys40 and Cys72 are disulfide-bonded. Asn43, Asn81, and Asn117 each carry an N-linked (GlcNAc...) asparagine glycan. A disulfide bridge links Cys120 with Cys150. The active-site Nucleophile is the Asp148. Asn197 carries an N-linked (GlcNAc...) asparagine glycan. Residue Asp206 is the Proton donor of the active site. The Ricin B-type lectin domain occupies 402–525 (PPDCPMVIPT…GLPSGVDIEA (124 aa)). 2 disulfide bridges follow: Cys422–Cys434 and Cys459–Cys472.

The protein belongs to the glycosyl hydrolase 27 family.

It localises to the secreted. The catalysed reaction is Hydrolysis of terminal, non-reducing alpha-D-galactose residues in alpha-D-galactosides, including galactose oligosaccharides, galactomannans and galactolipids.. Hydrolyzes a variety of simple alpha-D-galactoside as well as more complex molecules such as oligosaccharides and polysaccharides. The chain is Probable alpha-galactosidase A (aglA) from Aspergillus clavatus (strain ATCC 1007 / CBS 513.65 / DSM 816 / NCTC 3887 / NRRL 1 / QM 1276 / 107).